A 108-amino-acid polypeptide reads, in one-letter code: UPF0060 membrane protein Mfla_0485 (108 aa).

Helical transmembrane passes span 7–27 (FSLF…PYLW), 33–53 (SVWL…LLSL), 63–83 (AAYG…VDGI), and 87–107 (TWDF…MFAP).

The protein belongs to the UPF0060 family.

It is found in the cell inner membrane. This Methylobacillus flagellatus (strain ATCC 51484 / DSM 6875 / VKM B-1610 / KT) protein is UPF0060 membrane protein Mfla_0485.